Here is a 336-residue protein sequence, read N- to C-terminus: Holliday junction branch migration complex subunit RuvB (336 aa).

The tract at residues 4 to 184 is large ATPase domain (RuvB-L); it reads ADRLISAGTT…FGIVQRLEFY (181 aa). ATP is bound by residues Ile-23, Arg-24, Gly-65, Lys-68, Thr-69, Thr-70, 131-133, Arg-174, Tyr-184, and Arg-221; that span reads EDY. Mg(2+) is bound at residue Thr-69. A small ATPAse domain (RuvB-S) region spans residues 185–255; sequence QVPDLQYIVS…IAAQALDMLN (71 aa). Positions 258–336 are head domain (RuvB-H); the sequence is AEGFDYMDRK…HFGITPPEMP (79 aa). DNA-binding residues include Arg-294, Arg-313, and Arg-318.

Belongs to the RuvB family. In terms of assembly, homohexamer. Forms an RuvA(8)-RuvB(12)-Holliday junction (HJ) complex. HJ DNA is sandwiched between 2 RuvA tetramers; dsDNA enters through RuvA and exits via RuvB. An RuvB hexamer assembles on each DNA strand where it exits the tetramer. Each RuvB hexamer is contacted by two RuvA subunits (via domain III) on 2 adjacent RuvB subunits; this complex drives branch migration. In the full resolvosome a probable DNA-RuvA(4)-RuvB(12)-RuvC(2) complex forms which resolves the HJ.

The protein localises to the cytoplasm. The catalysed reaction is ATP + H2O = ADP + phosphate + H(+). The RuvA-RuvB-RuvC complex processes Holliday junction (HJ) DNA during genetic recombination and DNA repair, while the RuvA-RuvB complex plays an important role in the rescue of blocked DNA replication forks via replication fork reversal (RFR). RuvA specifically binds to HJ cruciform DNA, conferring on it an open structure. The RuvB hexamer acts as an ATP-dependent pump, pulling dsDNA into and through the RuvAB complex. RuvB forms 2 homohexamers on either side of HJ DNA bound by 1 or 2 RuvA tetramers; 4 subunits per hexamer contact DNA at a time. Coordinated motions by a converter formed by DNA-disengaged RuvB subunits stimulates ATP hydrolysis and nucleotide exchange. Immobilization of the converter enables RuvB to convert the ATP-contained energy into a lever motion, pulling 2 nucleotides of DNA out of the RuvA tetramer per ATP hydrolyzed, thus driving DNA branch migration. The RuvB motors rotate together with the DNA substrate, which together with the progressing nucleotide cycle form the mechanistic basis for DNA recombination by continuous HJ branch migration. Branch migration allows RuvC to scan DNA until it finds its consensus sequence, where it cleaves and resolves cruciform DNA. In Escherichia coli (strain ATCC 8739 / DSM 1576 / NBRC 3972 / NCIMB 8545 / WDCM 00012 / Crooks), this protein is Holliday junction branch migration complex subunit RuvB.